A 113-amino-acid polypeptide reads, in one-letter code: Putative pterin-4-alpha-carbinolamine dehydratase (113 aa).

This sequence belongs to the pterin-4-alpha-carbinolamine dehydratase family.

The catalysed reaction is (4aS,6R)-4a-hydroxy-L-erythro-5,6,7,8-tetrahydrobiopterin = (6R)-L-erythro-6,7-dihydrobiopterin + H2O. This Legionella pneumophila (strain Lens) protein is Putative pterin-4-alpha-carbinolamine dehydratase.